Reading from the N-terminus, the 601-residue chain is MPNSLAGGQVPNPTLDAFDLVDRSLRNAGISGSIPGLEEGGTDPWTFSPLKNADQLKEVGMASRLRRVVSSFLKACGLLGSLYFFICSLDILSSAFQLLGSKMAGDIFKDNVVLSNPVAGLVIGVLVTVLVQSSSTSSSIVVSMVASKLLTVQVSVPIIMGVNVGTSITSTLVSMAQSGDRDEFQRAFSGSAVHGIFNWLTVLVLLPLESATAALERLSELALGAASLQPGQQAPDILKALTRPFTHLIIQLDSSVITSGITSNTTNSSLIKHWCGFRGETPQGSSEGCGLFSSCTERNSSASPEEDRLLCHHLFAGSKLTDLAVGFILLAGSLLVLCVCLVLIVKLLNSVLKGRIAQAVKTVINADFPFPFGWLSGYLAILVGAGLTFLLQSSSVFTAAIVPLMGVGVIDLERAYPLFLGSNIGTTTTALLAALASPADMLIFAVQVALIHFFFNLAGILLWYLVPVLRLPIPLAKRFGNLTAQYRWVAIVYLLLTFLLLPLAAFGLSLAGGTVLAAVGGPLVGLVLLIILVNVLQQHRPSWLPRCLQSWAWLPLWLHSLEPWDRLVTACCPCRACSNSPMTSKVAHCYENPQVIASQQL.

Residues 1–75 (MPNSLAGGQV…RRVVSSFLKA (75 aa)) are Cytoplasmic-facing. S4 is modified (phosphoserine). Residues 76-96 (CGLLGSLYFFICSLDILSSAF) traverse the membrane as a helical segment. The Extracellular portion of the chain corresponds to 97–110 (QLLGSKMAGDIFKD). The chain crosses the membrane as a helical span at residues 111-131 (NVVLSNPVAGLVIGVLVTVLV). At 132–187 (QSSSTSSSIVVSMVASKLLTVQVSVPIIMGVNVGTSITSTLVSMAQSGDRDEFQRA) the chain is on the cytoplasmic side. Residues 188–208 (FSGSAVHGIFNWLTVLVLLPL) form a helical membrane-spanning segment. Residues 209-324 (ESATAALERL…FAGSKLTDLA (116 aa)) are Extracellular-facing. Residues N264, N267, and N299 are each glycosylated (N-linked (GlcNAc...) asparagine). C275 and C311 form a disulfide bridge. The chain crosses the membrane as a helical span at residues 325-345 (VGFILLAGSLLVLCVCLVLIV). The Cytoplasmic segment spans residues 346-369 (KLLNSVLKGRIAQAVKTVINADFP). Residues 370–390 (FPFGWLSGYLAILVGAGLTFL) form a helical membrane-spanning segment. Residues 391–441 (LQSSSVFTAAIVPLMGVGVIDLERAYPLFLGSNIGTTTTALLAALASPADM) lie on the Extracellular side of the membrane. A helical transmembrane segment spans residues 442–462 (LIFAVQVALIHFFFNLAGILL). Residues 463–487 (WYLVPVLRLPIPLAKRFGNLTAQYR) are Cytoplasmic-facing. Residues 488 to 508 (WVAIVYLLLTFLLLPLAAFGL) traverse the membrane as a helical segment. The Extracellular portion of the chain corresponds to 509–512 (SLAG). A helical membrane pass occupies residues 513–533 (GTVLAAVGGPLVGLVLLIILV). The Cytoplasmic portion of the chain corresponds to 534-601 (NVLQQHRPSW…NPQVIASQQL (68 aa)).

The protein belongs to the SLC34A transporter family. As to expression, expressed only in the kidney.

It is found in the apical cell membrane. It carries out the reaction 2 Na(+)(out) + phosphate(out) = 2 Na(+)(in) + phosphate(in). Functionally, involved in actively transporting phosphate into cells via Na(+) cotransport in the renal brush border membrane. The cotransport has a Na(+):Pi stoichiometry of 2:1 and is electroneutral. This is Sodium-dependent phosphate transport protein 2C (Slc34a3) from Mus musculus (Mouse).